The sequence spans 431 residues: Adenosylhomocysteinase (431 aa).

T56, D131, and E156 together coordinate substrate. 157 to 159 is an NAD(+) binding site; sequence TTT. Residues K186 and D190 each coordinate substrate. NAD(+)-binding positions include N191, 222 to 227, E243, 299 to 301, and N345; these read GDVGKG and IGH.

The protein belongs to the adenosylhomocysteinase family. Homotetramer. NAD(+) serves as cofactor.

The enzyme catalyses S-adenosyl-L-homocysteine + H2O = L-homocysteine + adenosine. The protein operates within amino-acid biosynthesis; L-homocysteine biosynthesis; L-homocysteine from S-adenosyl-L-homocysteine: step 1/1. Its function is as follows. Adenosylhomocysteine is a competitive inhibitor of S-adenosyl-L-methionine-dependent methyl transferase reactions; therefore adenosylhomocysteinase may play a key role in the control of methylations via regulation of the intracellular concentration of adenosylhomocysteine. This chain is Adenosylhomocysteinase (sahA), found in Dictyostelium discoideum (Social amoeba).